We begin with the raw amino-acid sequence, 649 residues long: MKFKWDEFFVTGDPLILGAQVSIALSTIAIIFVLTYFKKWKWLWSEWITTVDHKKLGIMYIISAVIMLFRGGVDGLMMRAQLALPNNSFLDSNHYNEIFTTHGTIMIIFMAMPFLIGLINVVVPLQIGARDVAFPYLNNLSFWTFFVGAMLFNISFVIGGSPNAGWTSYMPLASNDMSPGPGENYYLLGLQIAGIGTLMTGINFMVTILKMRTKGMTLMRMPMFTWTTLITMVIIVFAFPVLTVALALLSFDRLFGAHFFTLEAGGMPMLWANLFWIWGHPEVYIVILPAFGIFSEIISSFARKQLFGYTAMVGSIIAISVLSFLVWTHHFFTMGNSASVNSFFSITTMAISIPTGVKIFNWLFTMYKGRISFTTPMLWALAFIPNFVIGGVTGVMLAMAAADYQYHNTYFLVSHFHYVLIAGTVFACFAGFIFWYPKMFGHKLNERIGKWFFWIFMIGFNICFFPQYFLGLQGMPRRIYTYGPNDGWTTLNFISTVGAFMMGVGFLILCYNIYYSFRYSTREISGDSWGVGRSLDWATSSAIPPHYNFAVLPEVKSKDAFHHMKEEKTELYPESKFKKIHMPSNSGRPFFMSVAFGIAGFGLVFEWYWMGVVGLIGVLLCMVLRSFEYDNGYYISVDEIKETERKISE.

Topologically, residues 1–13 (MKFKWDEFFVTGD) are extracellular. Residues 14 to 34 (PLILGAQVSIALSTIAIIFVL) traverse the membrane as a helical segment. Topologically, residues 35 to 55 (TYFKKWKWLWSEWITTVDHKK) are cytoplasmic. The chain crosses the membrane as a helical span at residues 56-76 (LGIMYIISAVIMLFRGGVDGL). Topologically, residues 77 to 104 (MMRAQLALPNNSFLDSNHYNEIFTTHGT) are extracellular. Fe(II)-heme a is bound at residue H102. A helical transmembrane segment spans residues 105-125 (IMIIFMAMPFLIGLINVVVPL). The Cytoplasmic portion of the chain corresponds to 126–139 (QIGARDVAFPYLNN). The chain crosses the membrane as a helical span at residues 140–160 (LSFWTFFVGAMLFNISFVIGG). Over 161–187 (SPNAGWTSYMPLASNDMSPGPGENYYL) the chain is Extracellular. A helical membrane pass occupies residues 188-208 (LGLQIAGIGTLMTGINFMVTI). Over 209 to 228 (LKMRTKGMTLMRMPMFTWTT) the chain is Cytoplasmic. Residues 229-249 (LITMVIIVFAFPVLTVALALL) form a helical membrane-spanning segment. Topologically, residues 250-273 (SFDRLFGAHFFTLEAGGMPMLWAN) are extracellular. Residues 274 to 294 (LFWIWGHPEVYIVILPAFGIF) form a helical membrane-spanning segment. 2 residues coordinate Cu cation: H280 and Y284. A cross-link (1'-histidyl-3'-tyrosine (His-Tyr)) is located at residues 280 to 284 (HPEVY). Over 295–305 (SEIISSFARKQ) the chain is Cytoplasmic. Residues 306 to 326 (LFGYTAMVGSIIAISVLSFLV) form a helical membrane-spanning segment. Residues 327 to 342 (WTHHFFTMGNSASVNS) lie on the Extracellular side of the membrane. Cu cation contacts are provided by H329 and H330. Residues 343–363 (FFSITTMAISIPTGVKIFNWL) form a helical membrane-spanning segment. Over 364 to 376 (FTMYKGRISFTTP) the chain is Cytoplasmic. Residues 377–397 (MLWALAFIPNFVIGGVTGVML) traverse the membrane as a helical segment. The Extracellular portion of the chain corresponds to 398–415 (AMAAADYQYHNTYFLVSH). H415 lines the heme a3 pocket. The chain crosses the membrane as a helical span at residues 416–436 (FHYVLIAGTVFACFAGFIFWY). H417 provides a ligand contact to Fe(II)-heme a. At 437–451 (PKMFGHKLNERIGKW) the chain is on the cytoplasmic side. The helical transmembrane segment at 452-472 (FFWIFMIGFNICFFPQYFLGL) threads the bilayer. The Extracellular segment spans residues 473 to 492 (QGMPRRIYTYGPNDGWTTLN). A helical transmembrane segment spans residues 493 to 513 (FISTVGAFMMGVGFLILCYNI). The Cytoplasmic portion of the chain corresponds to 514–585 (YYSFRYSTRE…KFKKIHMPSN (72 aa)). The chain crosses the membrane as a helical span at residues 586-603 (SGRPFFMSVAFGIAGFGL). The Extracellular portion of the chain corresponds to 604 to 606 (VFE). Residues 607–624 (WYWMGVVGLIGVLLCMVL) traverse the membrane as a helical segment. At 625–649 (RSFEYDNGYYISVDEIKETERKISE) the chain is on the cytoplasmic side.

This sequence belongs to the heme-copper respiratory oxidase family. Cu cation serves as cofactor. Requires ferriheme a as cofactor. The cofactor is Heme A3..

The protein localises to the cell membrane. The catalysed reaction is 2 a quinol + O2 = 2 a quinone + 2 H2O. Its pathway is energy metabolism; oxidative phosphorylation. Its function is as follows. Catalyzes quinol oxidation with the concomitant reduction of oxygen to water. Major component for energy conversion during vegetative growth. The polypeptide is Quinol oxidase subunit 1 (qoxB) (Bacillus spizizenii (strain ATCC 23059 / NRRL B-14472 / W23) (Bacillus subtilis subsp. spizizenii)).